The following is a 529-amino-acid chain: Peptide chain release factor 3 (529 aa).

In terms of domain architecture, tr-type G spans 11–280; the sequence is SKRRTFAIIS…SLIKWAPSPI (270 aa). Residues 20-27, 88-92, and 142-145 contribute to the GTP site; these read SHPDAGKT, DTPGH, and NKLD.

Belongs to the TRAFAC class translation factor GTPase superfamily. Classic translation factor GTPase family. PrfC subfamily.

It is found in the cytoplasm. Its function is as follows. Increases the formation of ribosomal termination complexes and stimulates activities of RF-1 and RF-2. It binds guanine nucleotides and has strong preference for UGA stop codons. It may interact directly with the ribosome. The stimulation of RF-1 and RF-2 is significantly reduced by GTP and GDP, but not by GMP. The polypeptide is Peptide chain release factor 3 (Buchnera aphidicola subsp. Schizaphis graminum (strain Sg)).